We begin with the raw amino-acid sequence, 475 residues long: FAD-dependent monooxygenase penE (475 aa).

Residues E35, G49, and R108 each contribute to the FAD site. Y216 is an active-site residue. Residues D308 and A321 each coordinate FAD. N-linked (GlcNAc...) asparagine glycosylation is present at N437. The chain crosses the membrane as a helical span at residues 446 to 466; that stretch reads WGSIWLSPVILCLFCMLFLWP.

The protein belongs to the paxM FAD-dependent monooxygenase family. Requires FAD as cofactor.

Its subcellular location is the membrane. The enzyme catalyses [(1'E)-3'-hydroxy-3',7'-dimethylocta-1',6'-dien-1'-yl]-quinolinone B + NADPH + O2 + H(+) = [(1'E)-5'-(3',3'-dimethyloxiran-2'-yl)-3'-hydroxy-3'-methylpent-1'-en-1'-yl]-quinolinone B + NADP(+) + H2O. It functions in the pathway secondary metabolite biosynthesis. Its pathway is alkaloid biosynthesis. It participates in mycotoxin biosynthesis. In terms of biological role, FAD-dependent monooxygenase; part of the gene cluster that mediates the biosynthesis of penigequinolones, potent insecticidal alkaloids that contain a highly modified 10-carbon prenyl group. The first stage is catalyzed by the nonribosomal peptide synthetase penN that condenses anthranilic acid and O-methyl-L-tyrosine to produce 4'-methoxycyclopeptin. 4'-methoxycyclopeptin is then converted to 4'-methoxydehydrocyclopeptin by the ketoglutarate-dependent dioxygenase penM through dehydrogenation to form a double bond between C-alpha and C-beta of the O-methyltyrosine side chain. PenM also converts its first product methoxydehydrocyclopeptin to 4'-methoxycyclopenin. The following conversion of 4'methoxycyclopenin into 4'-methoxyviridicatin is catalyzed by the cyclopenase penL. 4'-methoxyviridicatin is the precursor of quinolone natural products, and is further converted to quinolinone B. The prenyltransferase penI then catalyzes the canonical Friedel-Crafts alkylation of quinolinone B with dimethylallyl cation to yield dimethylallyl quinolone, which is subjected to FAD-dependent dehydrogenation by the FAD-linked oxidoreductase penH to yield conjugated aryl diene. The delta(3') double bond then serves as the site of the second alkylation with DMAPP catalyzed by the prenyltransferase penG to yield a carbenium ion intermediate, which can be attacked by H(2)O to yield a styrenyl quinolone containing a C3'-hydroxyprenyl chain, or undergo cyclization to yield yaequinolones J1 and J2. The conversion of the styrenyl quinolone into the tetrahydrofuran-containing yaequinolone C is performed by the FAD-dependent monooxygenase penE and involves epoxidation of the terminal C7'-C8' olefin, followed by epoxide ring opening initiated by the C3' hydroxyl group. The predicted cysteine hydrolase penJ acts as an epoxide hydrolase that enhances the rate of the 5-exo-tet cyclization step, increasing the yield of yaequinolone C. PenF catalyzes the cationic rearrangement of the epoxide formed by penE (before ring opening to produce yaequinolone C) into yaequinolone D. Finally, the short-chain dehydrogenase/reductase (SDR)-like reductase penD, catalyzes both the dehydration of yaequinolone D and the reduction of the resulting oxonium to yield penigequinolone. The polypeptide is FAD-dependent monooxygenase penE (Penicillium thymicola).